Consider the following 304-residue polypeptide: Glutaminase (304 aa).

Residues Ser63, Asn114, Glu158, Asn165, Tyr189, Tyr240, and Val258 each contribute to the substrate site.

This sequence belongs to the glutaminase family. In terms of assembly, homotetramer.

The enzyme catalyses L-glutamine + H2O = L-glutamate + NH4(+). The chain is Glutaminase from Shewanella baltica (strain OS185).